Consider the following 359-residue polypeptide: Nicotinate-nucleotide--dimethylbenzimidazole phosphoribosyltransferase (359 aa).

The Proton acceptor role is filled by Glu318.

The protein belongs to the CobT family. In terms of assembly, homodimer.

It carries out the reaction 5,6-dimethylbenzimidazole + nicotinate beta-D-ribonucleotide = alpha-ribazole 5'-phosphate + nicotinate + H(+). It functions in the pathway nucleoside biosynthesis; alpha-ribazole biosynthesis; alpha-ribazole from 5,6-dimethylbenzimidazole: step 1/2. Catalyzes the synthesis of alpha-ribazole-5'-phosphate from nicotinate mononucleotide (NAMN) and 5,6-dimethylbenzimidazole (DMB). The protein is Nicotinate-nucleotide--dimethylbenzimidazole phosphoribosyltransferase of Shigella flexneri serotype 5b (strain 8401).